A 212-amino-acid polypeptide reads, in one-letter code: Imidazole glycerol phosphate synthase subunit HisH (212 aa).

The region spanning 4 to 210 is the Glutamine amidotransferase type-1 domain; sequence NIGIIDYGMG…LKWLHEKNSD (207 aa). Residue Cys-82 is the Nucleophile of the active site. Catalysis depends on residues His-185 and Glu-187.

Heterodimer of HisH and HisF.

The protein localises to the cytoplasm. The catalysed reaction is 5-[(5-phospho-1-deoxy-D-ribulos-1-ylimino)methylamino]-1-(5-phospho-beta-D-ribosyl)imidazole-4-carboxamide + L-glutamine = D-erythro-1-(imidazol-4-yl)glycerol 3-phosphate + 5-amino-1-(5-phospho-beta-D-ribosyl)imidazole-4-carboxamide + L-glutamate + H(+). It carries out the reaction L-glutamine + H2O = L-glutamate + NH4(+). It functions in the pathway amino-acid biosynthesis; L-histidine biosynthesis; L-histidine from 5-phospho-alpha-D-ribose 1-diphosphate: step 5/9. IGPS catalyzes the conversion of PRFAR and glutamine to IGP, AICAR and glutamate. The HisH subunit catalyzes the hydrolysis of glutamine to glutamate and ammonia as part of the synthesis of IGP and AICAR. The resulting ammonia molecule is channeled to the active site of HisF. This chain is Imidazole glycerol phosphate synthase subunit HisH, found in Prochlorococcus marinus (strain MIT 9211).